A 537-amino-acid chain; its full sequence is ATP synthase subunit alpha (537 aa).

174-181 (GDRQTGKT) serves as a coordination point for ATP.

It belongs to the ATPase alpha/beta chains family. F-type ATPases have 2 components, CF(1) - the catalytic core - and CF(0) - the membrane proton channel. CF(1) has five subunits: alpha(3), beta(3), gamma(1), delta(1), epsilon(1). CF(0) has three main subunits: a(1), b(2) and c(9-12). The alpha and beta chains form an alternating ring which encloses part of the gamma chain. CF(1) is attached to CF(0) by a central stalk formed by the gamma and epsilon chains, while a peripheral stalk is formed by the delta and b chains.

It localises to the cell inner membrane. It catalyses the reaction ATP + H2O + 4 H(+)(in) = ADP + phosphate + 5 H(+)(out). Functionally, produces ATP from ADP in the presence of a proton gradient across the membrane. The alpha chain is a regulatory subunit. The chain is ATP synthase subunit alpha from Verminephrobacter eiseniae (strain EF01-2).